A 130-amino-acid chain; its full sequence is Small ribosomal subunit protein uS8 (130 aa).

Belongs to the universal ribosomal protein uS8 family. As to quaternary structure, part of the 30S ribosomal subunit. Contacts proteins S5 and S12.

Its function is as follows. One of the primary rRNA binding proteins, it binds directly to 16S rRNA central domain where it helps coordinate assembly of the platform of the 30S subunit. The chain is Small ribosomal subunit protein uS8 from Saccharophagus degradans (strain 2-40 / ATCC 43961 / DSM 17024).